The chain runs to 642 residues: Threonine--tRNA ligase (642 aa).

Residues 1-61 (MPVITLPDGS…ENDAQLSIIT (61 aa)) enclose the TGS domain. The segment at 243 to 534 (DHRKIGKQLD…LTEEFAGFFP (292 aa)) is catalytic. N6-acetyllysine is present on Lys-286. 3 residues coordinate Zn(2+): Cys-334, His-385, and His-511.

It belongs to the class-II aminoacyl-tRNA synthetase family. In terms of assembly, homodimer. The cofactor is Zn(2+).

It localises to the cytoplasm. The catalysed reaction is tRNA(Thr) + L-threonine + ATP = L-threonyl-tRNA(Thr) + AMP + diphosphate + H(+). Catalyzes the attachment of threonine to tRNA(Thr) in a two-step reaction: L-threonine is first activated by ATP to form Thr-AMP and then transferred to the acceptor end of tRNA(Thr). Also edits incorrectly charged L-seryl-tRNA(Thr). The sequence is that of Threonine--tRNA ligase from Shigella flexneri serotype 5b (strain 8401).